Consider the following 444-residue polypeptide: MFSASPANRNIFTVSKLNHLARSVLESEIGQVWLSAEISNFVAASSGHWYFTLKDNRAQIKSAMFKGANRKVMTRPKEGDKVLVQANLSIYEPRGDYQLIVEHLEPEGEGQLKRQFEALKLALSAQGLFANENKQPLPDSISRIGVVTSATGAALHDILTVLKRRNPAVEVIIYPTQVQGANASRQICRSIEIANQRNEVDILIVGRGGGSLEDLWCFNEENVAWAIHYSVLPIVSAVGHEVDITIADFVADLRAPTPSAAAELVSQSQIEMLSALTAKRDRLYKNTRTLLKELHYQQQSLTQELNTYHPKNQLRQHMQRVDNQLTAITHNMTTRLMRAKQTCDSRISKLSQLSPKALLKEQQNTHNLLSQRLTQAWRRGVEQRHLKLANASHLLDTVSPLSTLARGYSITFKNDKVVKSQKDLAKGDVITNRFADGETKSTVN.

Belongs to the XseA family. Heterooligomer composed of large and small subunits.

It is found in the cytoplasm. The enzyme catalyses Exonucleolytic cleavage in either 5'- to 3'- or 3'- to 5'-direction to yield nucleoside 5'-phosphates.. Functionally, bidirectionally degrades single-stranded DNA into large acid-insoluble oligonucleotides, which are then degraded further into small acid-soluble oligonucleotides. This Pseudoalteromonas atlantica (strain T6c / ATCC BAA-1087) protein is Exodeoxyribonuclease 7 large subunit.